Here is an 89-residue protein sequence, read N- to C-terminus: Small ribosomal subunit protein uS14A (89 aa).

The protein belongs to the universal ribosomal protein uS14 family. As to quaternary structure, part of the 30S ribosomal subunit. Contacts proteins S3 and S10.

In terms of biological role, binds 16S rRNA, required for the assembly of 30S particles and may also be responsible for determining the conformation of the 16S rRNA at the A site. The sequence is that of Small ribosomal subunit protein uS14A from Listeria welshimeri serovar 6b (strain ATCC 35897 / DSM 20650 / CCUG 15529 / CIP 8149 / NCTC 11857 / SLCC 5334 / V8).